A 180-amino-acid chain; its full sequence is Shikimate kinase (180 aa).

Residue 19-24 (GAGKTT) participates in ATP binding. Residue Thr23 participates in Mg(2+) binding. Positions 41, 65, and 87 each coordinate substrate. Arg125 lines the ATP pocket. A substrate-binding site is contributed by Arg144.

Belongs to the shikimate kinase family. Monomer. Mg(2+) is required as a cofactor.

It localises to the cytoplasm. The catalysed reaction is shikimate + ATP = 3-phosphoshikimate + ADP + H(+). It participates in metabolic intermediate biosynthesis; chorismate biosynthesis; chorismate from D-erythrose 4-phosphate and phosphoenolpyruvate: step 5/7. Functionally, catalyzes the specific phosphorylation of the 3-hydroxyl group of shikimic acid using ATP as a cosubstrate. The protein is Shikimate kinase of Acinetobacter baylyi (strain ATCC 33305 / BD413 / ADP1).